Here is a 106-residue protein sequence, read N- to C-terminus: uncharacterized protein (106 aa).

The interval 1-46 is disordered; it reads MPQGGTPCRRARRAVRPERPTSPEGVFCVGGGAPGGPPDTTNTVSA.

This is an uncharacterized protein from Gracula (BFDV).